The following is a 1249-amino-acid chain: Fanconi anemia group J protein (1249 aa).

Residues 11 to 442 (GGVKIYFPYK…KDHEPLRAVC (432 aa)) enclose the Helicase ATP-binding domain. A compositionally biased stretch (polar residues) spans 102-127 (QGTSRHFNYPSTPPSERNGTSSTCQD). Residues 102 to 131 (QGTSRHFNYPSTPPSERNGTSSTCQDSPEK) form a disordered region. The Nuclear localization signal signature appears at 158-175 (KKRIRPLETTQQIRKRHC). An ATP-binding site is contributed by 185-192 (AKVDSGKT). [4Fe-4S] cluster is bound by residues Cys-283, Cys-298, Cys-310, and Cys-350. The DEAH box signature appears at 393 to 396 (DEAH). Phosphoserine is present on residues Ser-505, Ser-927, Ser-930, Ser-956, Ser-990, Ser-1004, and Ser-1032. The tract at residues 888-1063 (HQKVLNVSIK…ESSNLTVNTS (176 aa)) is interaction with BRCA1. 2 disordered regions span residues 1018–1042 (KATP…EKME) and 1108–1127 (VSEE…EAED). Residues 1023-1032 (LGSSENSASS) show a composition bias toward polar residues. Over residues 1110–1122 (EEDKQSTSNRDFE) the composition is skewed to basic and acidic residues. Phosphoserine is present on Ser-1237. Lys-1249 is modified (N6-acetyllysine).

It belongs to the DEAD box helicase family. DEAH subfamily. Interacts with the replication protein A complex (RPA) via the RPA1 subunit; following DNA damage they colocalize in foci in the nucleus. Binds directly to the BRCT domains of BRCA1. Interacts with the CIA complex components CIAO1, CIAO2B and MMS19. It depends on [4Fe-4S] cluster as a cofactor. Phosphorylated. Phosphorylation is necessary for interaction with BRCA1, and is cell-cycle regulated. Post-translationally, acetylation at Lys-1249 facilitates DNA end processing required for repair and checkpoint signaling. In terms of tissue distribution, ubiquitously expressed, with highest levels in testis.

It localises to the nucleus. The protein resides in the cytoplasm. It catalyses the reaction Couples ATP hydrolysis with the unwinding of duplex DNA at the replication fork by translocating in the 5'-3' direction. This creates two antiparallel DNA single strands (ssDNA). The leading ssDNA polymer is the template for DNA polymerase III holoenzyme which synthesizes a continuous strand.. It carries out the reaction ATP + H2O = ADP + phosphate + H(+). Its activity is regulated as follows. Helicase activity on forked substrates is stimulated by replication protein A complex heterotrimer (RPA1, RPA2, RPA3). Helicase activity on G-quadruplex DNA is stimulated 3-fold by RPA, and inhibited by MSH2/MSH6. Unwinding of G-quadruplex DNA is inhibited by ATP-gamma-S and telomestatin (TMS); TMA does not inhibit unwinding of forked-duplex DNA. Helicase activity on dsDNA and G-quadruplex DNA is inhibited by porphyrin derivatives meso-tetra (N-methyl-4-pyridyl) porphine tetra tosylate (T4) and N-methyl mesoporphyrin IX (NMM). In terms of biological role, DNA-dependent ATPase and 5'-3' DNA helicase required for the maintenance of chromosomal stability. Acts late in the Fanconi anemia pathway, after FANCD2 ubiquitination. Involved in the repair of DNA double-strand breaks by homologous recombination in a manner that depends on its association with BRCA1. Involved in the repair of abasic sites at replication forks by promoting the degradation of DNA-protein cross-links: acts by catalyzing unfolding of HMCES DNA-protein cross-link via its helicase activity, exposing the underlying DNA and enabling cleavage of the DNA-protein adduct by the SPRTN metalloprotease. Can unwind RNA:DNA substrates. Unwinds G-quadruplex DNA; unwinding requires a 5'-single stranded tail. The polypeptide is Fanconi anemia group J protein (Homo sapiens (Human)).